The chain runs to 443 residues: Ribosomal protein uS12 methylthiotransferase RimO (443 aa).

Residues 8–118 (PKIGFVSLGC…VLSHIHHYVP (111 aa)) enclose the MTTase N-terminal domain. [4Fe-4S] cluster-binding residues include Cys17, Cys53, Cys82, Cys150, Cys154, and Cys157. The 238-residue stretch at 136–373 (LTPRHYAYLK…MQLQQQISTE (238 aa)) folds into the Radical SAM core domain. Positions 376–442 (QEKIGKVLPV…EYDLWGTIVE (67 aa)) constitute a TRAM domain.

Belongs to the methylthiotransferase family. RimO subfamily. [4Fe-4S] cluster is required as a cofactor.

The protein resides in the cytoplasm. It catalyses the reaction L-aspartate(89)-[ribosomal protein uS12]-hydrogen + (sulfur carrier)-SH + AH2 + 2 S-adenosyl-L-methionine = 3-methylsulfanyl-L-aspartate(89)-[ribosomal protein uS12]-hydrogen + (sulfur carrier)-H + 5'-deoxyadenosine + L-methionine + A + S-adenosyl-L-homocysteine + 2 H(+). Catalyzes the methylthiolation of an aspartic acid residue of ribosomal protein uS12. This Proteus mirabilis (strain HI4320) protein is Ribosomal protein uS12 methylthiotransferase RimO.